A 341-amino-acid polypeptide reads, in one-letter code: S-adenosylmethionine:tRNA ribosyltransferase-isomerase (341 aa).

The protein belongs to the QueA family. As to quaternary structure, monomer.

It is found in the cytoplasm. The catalysed reaction is 7-aminomethyl-7-carbaguanosine(34) in tRNA + S-adenosyl-L-methionine = epoxyqueuosine(34) in tRNA + adenine + L-methionine + 2 H(+). It participates in tRNA modification; tRNA-queuosine biosynthesis. Its function is as follows. Transfers and isomerizes the ribose moiety from AdoMet to the 7-aminomethyl group of 7-deazaguanine (preQ1-tRNA) to give epoxyqueuosine (oQ-tRNA). The polypeptide is S-adenosylmethionine:tRNA ribosyltransferase-isomerase (Symbiobacterium thermophilum (strain DSM 24528 / JCM 14929 / IAM 14863 / T)).